Here is a 342-residue protein sequence, read N- to C-terminus: Alternative oxidase, mitochondrial (342 aa).

A mitochondrion-targeting transit peptide spans 1 to 20; the sequence is MIKTYQYRSILNSRNVGIRF. The chain crosses the membrane as a helical span at residues 135 to 155; that stretch reads LTRCIFLESVAGVPGMVAAFI. Fe cation contacts are provided by E142, E181, and H184. The chain crosses the membrane as a helical span at residues 200–220; that stretch reads FIIYMGQGVFANLFFLVYLIK. Residues E232, E287, and H290 each contribute to the Fe cation site. 2 stretches are compositionally biased toward basic and acidic residues: residues 308–321 and 330–342; these read PFALKVEDVPKEQQ and PHPEGWNREQMRL. The interval 308–342 is disordered; that stretch reads PFALKVEDVPKEQQPDEYSLKTPHPEGWNREQMRL.

The protein belongs to the alternative oxidase family. In terms of assembly, homodimer; disulfide-linked. Fe cation is required as a cofactor.

It localises to the mitochondrion inner membrane. In terms of biological role, catalyzes cyanide-resistant oxygen consumption. May increase respiration when the cytochrome respiratory pathway is restricted, or in response to low temperatures. This chain is Alternative oxidase, mitochondrial (AOX1), found in Wickerhamomyces anomalus (Yeast).